An 89-amino-acid chain; its full sequence is Small ribosomal subunit protein uS14A (89 aa).

Belongs to the universal ribosomal protein uS14 family. In terms of assembly, part of the 30S ribosomal subunit. Contacts proteins S3 and S10.

Functionally, binds 16S rRNA, required for the assembly of 30S particles and may also be responsible for determining the conformation of the 16S rRNA at the A site. The sequence is that of Small ribosomal subunit protein uS14A from Bacillus velezensis (strain DSM 23117 / BGSC 10A6 / LMG 26770 / FZB42) (Bacillus amyloliquefaciens subsp. plantarum).